We begin with the raw amino-acid sequence, 155 residues long: Ciliary microtubule inner protein 2C (155 aa).

It belongs to the CIMIP2 family.

Its subcellular location is the cytoplasm. The protein localises to the cytoskeleton. It localises to the cilium axoneme. Microtubule inner protein (MIP) part of the dynein-decorated doublet microtubules (DMTs) in cilia axoneme, which is required for motile cilia beating. This is Ciliary microtubule inner protein 2C (cimip2cb) from Xenopus laevis (African clawed frog).